Here is an 87-residue protein sequence, read N- to C-terminus: Beta-mammal toxin Css4 (87 aa).

The N-terminal stretch at 1–19 is a signal peptide; the sequence is MNSLLMITACLALVGTVWA. The LCN-type CS-alpha/beta domain occupies 20 to 85; it reads KEGYLVNSYT…VWPLPNKTCN (66 aa). 4 disulfides stabilise this stretch: C31–C84, C35–C60, C44–C65, and C48–C67. N85 bears the Asparagine amide mark.

The protein belongs to the long (4 C-C) scorpion toxin superfamily. Sodium channel inhibitor family. Beta subfamily. As to expression, expressed by the venom gland.

The protein resides in the secreted. In terms of biological role, beta toxins bind voltage-independently at site-4 of sodium channels (Nav) and shift the voltage of activation toward more negative potentials thereby affecting sodium channel activation and promoting spontaneous and repetitive firing. This toxin is active only on mammals. This Centruroides suffusus (Durango bark scorpion) protein is Beta-mammal toxin Css4.